The primary structure comprises 374 residues: Cyclin-D (374 aa).

Belongs to the cyclin family. Cyclin D subfamily.

This Ostreococcus tauri protein is Cyclin-D (CycD).